The primary structure comprises 80 residues: Serine rich endogenous peptide 15 (80 aa).

Positions Met1–Ala28 are cleaved as a signal peptide. Short sequence motifs (SCOOP motif) lie at residues Ala32–Gly46 and Pro66–Pro80. The tract at residues Tyr37–Pro80 is disordered. 2 consecutive short sequence motifs (sxS motif essential for MIK2 binding) follow at residues Ser38–Ser40 and Ser72–Ser74. Over residues His71–Pro80 the composition is skewed to polar residues.

The protein belongs to the serine rich endogenous peptide (SCOOP) phytocytokine family. Interacts with MIK2 (via extracellular leucine-rich repeat domain); this interaction triggers the formation of complex between MIK2 and the BAK1/SERK3 and SERK4 coreceptors, and subsequent BAK1 activation by phosphorylation. Mostly expressed in leaves, and, to a lower extent, in seedlings shoots, roots, stems, siliques, seeds and flowers.

The protein localises to the cell membrane. The protein resides in the secreted. It is found in the extracellular space. It localises to the apoplast. Its subcellular location is the endoplasmic reticulum. The protein localises to the golgi apparatus. Functionally, brassicaceae-specific phytocytokine (plant endogenous peptide released into the apoplast) perceived by MIK2 in a BAK1/SERK3 and SERK4 coreceptors-dependent manner, that modulates various physiological and antimicrobial processes including growth prevention and reactive oxygen species (ROS) response regulation. Inhibits root growth. The sequence is that of Serine rich endogenous peptide 15 from Arabidopsis thaliana (Mouse-ear cress).